A 517-amino-acid polypeptide reads, in one-letter code: Forkhead box protein N4 (517 aa).

A DNA-binding region (fork-head) is located at residues 193–289 (KPIYSYSCLI…EEMHKWKRKD (97 aa)). Disordered regions lie at residues 365–398 (VQPQ…LPHP) and 497–517 (SGTS…IALL).

It localises to the nucleus. In terms of biological role, transcription factor essential for neural and some non-neural tissues development, such as retina and lung respectively. Binds to an 11-bp consensus sequence containing the invariant tetranucleotide 5'-ACGC-3'. During development of the central nervous system, is required to specify the amacrine and horizontal cell fates from multipotent retinal progenitors while suppressing the alternative photoreceptor cell fates through activating DLL4-NOTCH signaling. Also acts synergistically with ASCL1/MASH1 to activate DLL4-NOTCH signaling and drive commitment of p2 progenitors to the V2b interneuron fates during spinal cord neurogenesis. In development of non-neural tissues, plays an essential role in the specification of the atrioventricular canal and is indirectly required for patterning the distal airway during lung development. This chain is Forkhead box protein N4 (FOXN4), found in Homo sapiens (Human).